A 77-amino-acid polypeptide reads, in one-letter code: Translation initiation factor IF-1, chloroplastic (77 aa).

The 71-residue stretch at M1–R71 folds into the S1-like domain.

It belongs to the IF-1 family. In terms of assembly, component of the 30S ribosomal translation pre-initiation complex which assembles on the 30S ribosome in the order IF-2 and IF-3, IF-1 and N-formylmethionyl-tRNA(fMet); mRNA recruitment can occur at any time during PIC assembly.

It is found in the plastid. The protein resides in the chloroplast. One of the essential components for the initiation of protein synthesis. Stabilizes the binding of IF-2 and IF-3 on the 30S subunit to which N-formylmethionyl-tRNA(fMet) subsequently binds. Helps modulate mRNA selection, yielding the 30S pre-initiation complex (PIC). Upon addition of the 50S ribosomal subunit IF-1, IF-2 and IF-3 are released leaving the mature 70S translation initiation complex. The polypeptide is Translation initiation factor IF-1, chloroplastic (Phalaenopsis aphrodite subsp. formosana (Moth orchid)).